Reading from the N-terminus, the 113-residue chain is Large ribosomal subunit protein bL17 (113 aa).

This sequence belongs to the bacterial ribosomal protein bL17 family. In terms of assembly, part of the 50S ribosomal subunit. Contacts protein L32.

The sequence is that of Large ribosomal subunit protein bL17 from Clostridium botulinum (strain ATCC 19397 / Type A).